Here is a 398-residue protein sequence, read N- to C-terminus: Enoate reductase 1 (398 aa).

The FMN site is built by Thr37 and His191. Positions 191 and 194 each coordinate substrate. The active-site Proton donor is Tyr196. The FMN site is built by Arg243 and Arg348. Tyr375 provides a ligand contact to substrate.

This sequence belongs to the NADH:flavin oxidoreductase/NADH oxidase family. In terms of assembly, homodimer or heterodimer. It depends on FMN as a cofactor.

The enzyme catalyses butanoate + NAD(+) = (2E)-2-butenoate + NADH + H(+). Functionally, enoate reductase with broad substrate specificity for different alpha,beta-unsaturated carbonyl compounds. Prefers NADPH over NADH as cofactor. This chain is Enoate reductase 1 (KYE1), found in Kluyveromyces lactis (strain ATCC 8585 / CBS 2359 / DSM 70799 / NBRC 1267 / NRRL Y-1140 / WM37) (Yeast).